Reading from the N-terminus, the 569-residue chain is Potassium-transporting ATPase potassium-binding subunit (569 aa).

A run of 10 helical transmembrane segments spans residues 3–23 (LMEY…SPVL), 68–88 (AASL…VLML), 136–156 (VGLA…AVAV), 179–199 (VLYV…GQGV), 259–279 (LQML…GGAV), 284–304 (HAWT…CSLY), 384–404 (GLYG…LMVG), 422–442 (AMLA…VAAV), 490–510 (IALA…GVAG), and 534–554 (LLLT…ALAL).

Belongs to the KdpA family. As to quaternary structure, the system is composed of three essential subunits: KdpA, KdpB and KdpC.

The protein resides in the cell inner membrane. Part of the high-affinity ATP-driven potassium transport (or Kdp) system, which catalyzes the hydrolysis of ATP coupled with the electrogenic transport of potassium into the cytoplasm. This subunit binds the periplasmic potassium ions and delivers the ions to the membrane domain of KdpB through an intramembrane tunnel. This chain is Potassium-transporting ATPase potassium-binding subunit, found in Nitratidesulfovibrio vulgaris (strain ATCC 29579 / DSM 644 / CCUG 34227 / NCIMB 8303 / VKM B-1760 / Hildenborough) (Desulfovibrio vulgaris).